A 372-amino-acid polypeptide reads, in one-letter code: Probable G-protein coupled receptor 45 (372 aa).

The Extracellular portion of the chain corresponds to 1-38; that stretch reads MACNSTSLEAYTYLLLNTSNASDSGSTQLPAPLRISLA. Asn-4, Asn-17, and Asn-20 each carry an N-linked (GlcNAc...) asparagine glycan. A helical membrane pass occupies residues 39–59; it reads IVMLLMTVVGFLGNTVVCIIV. Topologically, residues 60–75 are cytoplasmic; that stretch reads YQRPAMRSAINLLLAT. The chain crosses the membrane as a helical span at residues 76-96; it reads LAFSDIMLSLCCMPFTAVTLI. The Extracellular portion of the chain corresponds to 97–109; it reads TVRWHFGDHFCRL. Residues 110-130 form a helical membrane-spanning segment; it reads SATLYWFFVLEGVAILLIISV. The Cytoplasmic segment spans residues 131–149; it reads DRFLIIVQRQDKLNPRRAK. Residues 150–170 form a helical membrane-spanning segment; sequence VIIAVSWVLSFCIAGPSLTGW. At 171–198 the chain is on the extracellular side; sequence TLVEVPARAPQCVLGYTELPADRAYVVT. The chain crosses the membrane as a helical span at residues 199–219; it reads LVVAVFFAPFGVMLCAYMCIL. The Cytoplasmic portion of the chain corresponds to 220 to 268; it reads NTVRKNAVRVHNQSDSLDLRQLTRAGLRRLQRQQQVSVDLSFKTKAFTT. A helical membrane pass occupies residues 269-289; sequence ILILFVGFSLCWLPHSVYSLL. The Extracellular segment spans residues 290 to 305; that stretch reads SVFSQRFYCGSSFYAT. A helical transmembrane segment spans residues 306-326; the sequence is STCVLWLSYLKSVFNPIVYCW. The Cytoplasmic portion of the chain corresponds to 327 to 372; the sequence is RIKKFREACIELLPQTFQILPKVPERIRRRIQPSTVYVCNENQSAV.

This sequence belongs to the G-protein coupled receptor 1 family. In terms of tissue distribution, expressed in brain; detected in the basal forebrain, frontal cortex, and caudate, but not in thalamus, hippocampus, or putamen.

The protein localises to the cell membrane. In terms of biological role, orphan receptor. May play a role in brain function. The sequence is that of Probable G-protein coupled receptor 45 (GPR45) from Homo sapiens (Human).